The sequence spans 291 residues: rRNA 2'-O-methyltransferase fibrillarin (291 aa).

Basic and acidic residues-rich tracts occupy residues 1-12 (MKKTNKRPDGRK) and 20-29 (FRSDKGEGRG). The tract at residues 1-45 (MKKTNKRPDGRKFQKGGKPFRSDKGEGRGRMNNKKKGSVNAGLDR) is disordered. Arginine 28 and arginine 62 each carry asymmetric dimethylarginine. S-adenosyl-L-methionine contacts are provided by residues 134–135 (TT), 153–154 (EF), 178–179 (DA), and 198–201 (DVSQ).

It belongs to the methyltransferase superfamily. Fibrillarin family. In terms of assembly, component of box C/D small nucleolar ribonucleoprotein (snoRNP) particles.

The protein resides in the nucleus. Its subcellular location is the nucleolus. The catalysed reaction is L-glutaminyl-[histone H2A] + S-adenosyl-L-methionine = N(5)-methyl-L-glutaminyl-[histone H2A] + S-adenosyl-L-homocysteine + H(+). In terms of biological role, S-adenosyl-L-methionine-dependent methyltransferase that has the ability to methylate both RNAs and proteins. Involved in pre-rRNA processing. Utilizes the methyl donor S-adenosyl-L-methionine to catalyze the site-specific 2'-hydroxyl methylation of ribose moieties in pre-ribosomal RNA. Site specificity is provided by a guide RNA that base pairs with the substrate. Methylation occurs at a characteristic distance from the sequence involved in base pairing with the guide RNA. Also acts as a protein methyltransferase by mediating methylation of 'Gln-105' of histone H2A (H2AQ105me), a modification that impairs binding of the FACT complex and is specifically present at 35S ribosomal DNA locus. This Encephalitozoon cuniculi (strain GB-M1) (Microsporidian parasite) protein is rRNA 2'-O-methyltransferase fibrillarin (NOP1).